Consider the following 830-residue polypeptide: Penicillin-binding protein 1A (830 aa).

The Cytoplasmic portion of the chain corresponds to 1–18 (MGKKKKKRKSSAFKIILN). Residues 19-39 (VFLSIFLVAGVAFGGIVFAMI) form a helical; Signal-anchor for type II membrane protein membrane-spanning segment. Residues 40-830 (KTAPPLNVQQ…QNHEDNKNKQ (791 aa)) are Extracellular-facing. The transglycosylase stretch occupies residues 57-229 (SILYDDKGQY…PSVYYPYSSA (173 aa)). Catalysis depends on E96, which acts as the Proton donor; for transglycosylase activity. The tract at residues 357–641 (ASAVIMDYHN…AARLWGDIMK (285 aa)) is transpeptidase. The active-site Acyl-ester intermediate; for transpeptidase activity is S398. The interval 754 to 830 (GGSLPPTEEK…QNHEDNKNKQ (77 aa)) is disordered. Residues 760–786 (TEEKNNSNTRDKNKDKNKNKNKDKNPS) show a composition bias toward basic and acidic residues. A compositionally biased stretch (low complexity) spans 787–820 (QDKPNNNNNDNNSNNNNNNNDNNNNTKPPENDSN). Positions 821 to 830 (QNHEDNKNKQ) are enriched in basic and acidic residues.

In the N-terminal section; belongs to the glycosyltransferase 51 family. The protein in the C-terminal section; belongs to the transpeptidase family.

The protein localises to the cell membrane. It carries out the reaction [GlcNAc-(1-&gt;4)-Mur2Ac(oyl-L-Ala-gamma-D-Glu-L-Lys-D-Ala-D-Ala)](n)-di-trans,octa-cis-undecaprenyl diphosphate + beta-D-GlcNAc-(1-&gt;4)-Mur2Ac(oyl-L-Ala-gamma-D-Glu-L-Lys-D-Ala-D-Ala)-di-trans,octa-cis-undecaprenyl diphosphate = [GlcNAc-(1-&gt;4)-Mur2Ac(oyl-L-Ala-gamma-D-Glu-L-Lys-D-Ala-D-Ala)](n+1)-di-trans,octa-cis-undecaprenyl diphosphate + di-trans,octa-cis-undecaprenyl diphosphate + H(+). The enzyme catalyses Preferential cleavage: (Ac)2-L-Lys-D-Ala-|-D-Ala. Also transpeptidation of peptidyl-alanyl moieties that are N-acyl substituents of D-alanine.. Its pathway is cell wall biogenesis; peptidoglycan biosynthesis. Cell wall formation. Synthesis of cross-linked peptidoglycan from the lipid intermediates. The enzyme has a penicillin-insensitive transglycosylase N-terminal domain (formation of linear glycan strands) and a penicillin-sensitive transpeptidase C-terminal domain (cross-linking of the peptide subunits). The chain is Penicillin-binding protein 1A (pbpA) from Clostridium botulinum (strain Hall / ATCC 3502 / NCTC 13319 / Type A).